The following is a 251-amino-acid chain: Transmembrane ascorbate-dependent reductase CYB561 (251 aa).

At methionine 1 the chain carries N-acetylmethionine. Residues 1 to 16 are Cytoplasmic-facing; it reads MEGGAAASTPAALPYY. Residues 17-37 traverse the membrane as a helical segment; the sequence is VAFSQLLGLTLVAMTGAWLGL. A Cytochrome b561 domain is found at 19–220; that stretch reads FSQLLGLTLV…FGGAVLYILT (202 aa). Topologically, residues 38–51 are vesicular; it reads YRGGIAWESDLQFN. A helical membrane pass occupies residues 52–72; the sequence is AHPLCMVIGLIFLQGDALLVY. Histidine 53, arginine 73, and lysine 80 together coordinate heme b. Over 73–85 the chain is Cytoplasmic; the sequence is RVFRNEAKRTTKV. The L-ascorbate site is built by lysine 80 and lysine 84. Residues 86-106 form a helical membrane-spanning segment; the sequence is LHGLLHIFALVIALVGLVAVF. Residues histidine 87, 116 to 119, and histidine 121 each bind heme b; that span reads DLYS. At 107 to 124 the chain is on the vesicular side; the sequence is DYHRKEGYADLYSLHSWC. Residues 125-145 traverse the membrane as a helical segment; the sequence is GILVFVLYFVQWLVGFSFFLF. Residues 146–158 are Cytoplasmic-facing; it reads PGASFSLRSRYRP. Arginine 153 serves as a coordination point for L-ascorbate. Residues 159-179 form a helical membrane-spanning segment; that stretch reads QHIFFGATIFLLSVGTALLGL. Residues histidine 160 and glutamate 181 each coordinate heme b. Residues 180–198 lie on the Vesicular side of the membrane; it reads KEALLFKLRDKYSAFEPEG. A helical transmembrane segment spans residues 199–219; that stretch reads VLANVLGLLLACFGGAVLYIL. The Cytoplasmic portion of the chain corresponds to 220-251; the sequence is TRADWKRPSQAEEQALSMDFKTLTEGDSPGSQ. Residue lysine 225 coordinates heme b. Serine 247 is subject to Phosphoserine.

It depends on heme b as a cofactor.

The protein localises to the cytoplasmic vesicle. It localises to the secretory vesicle. It is found in the chromaffin granule membrane. The catalysed reaction is monodehydro-L-ascorbate radical(out) + L-ascorbate(in) = monodehydro-L-ascorbate radical(in) + L-ascorbate(out). Transmembrane reductase that uses ascorbate as an electron donor in the cytoplasm and transfers electrons across membranes to reduce monodehydro-L-ascorbate radical in the lumen of secretory vesicles. It is therefore involved the regeneration and homeostasis within secretory vesicles of ascorbate which in turn provides reducing equivalents needed to support the activity of intravesicular enzymes. This chain is Transmembrane ascorbate-dependent reductase CYB561 (CYB561), found in Pongo abelii (Sumatran orangutan).